A 352-amino-acid chain; its full sequence is Ion-translocating oxidoreductase complex subunit D (352 aa).

The next 4 helical transmembrane spans lie at 20–40 (IMLL…WFFG), 42–62 (GTLF…AIVL), 69–91 (VASH…SIPP), and 123–143 (PAMI…TSWL). Thr187 carries the FMN phosphoryl threonine modification. Helical transmembrane passes span 215–235 (LAGV…VFLL), 242–262 (WHIP…GWLF), 267–287 (LASP…FFIL), 301–321 (LIFG…GGYP), and 322–342 (DGVA…DYYT).

This sequence belongs to the NqrB/RnfD family. The complex is composed of six subunits: RsxA, RsxB, RsxC, RsxD, RsxE and RsxG. FMN is required as a cofactor.

It localises to the cell inner membrane. Its function is as follows. Part of a membrane-bound complex that couples electron transfer with translocation of ions across the membrane. Required to maintain the reduced state of SoxR. This Salmonella enteritidis PT4 (strain P125109) protein is Ion-translocating oxidoreductase complex subunit D.